A 156-amino-acid polypeptide reads, in one-letter code: Small ribosomal subunit protein uS7 (156 aa).

The protein belongs to the universal ribosomal protein uS7 family. As to quaternary structure, part of the 30S ribosomal subunit. Contacts proteins S9 and S11.

Functionally, one of the primary rRNA binding proteins, it binds directly to 16S rRNA where it nucleates assembly of the head domain of the 30S subunit. Is located at the subunit interface close to the decoding center, probably blocks exit of the E-site tRNA. The protein is Small ribosomal subunit protein uS7 of Pelagibacter ubique (strain HTCC1062).